A 317-amino-acid chain; its full sequence is Melanocyte-stimulating hormone receptor (317 aa).

At 1-37 (MPVQGSQRRLLGSLNSTPTATPKLGLAANQTGAQCLE) the chain is on the extracellular side. An N-linked (GlcNAc...) asparagine glycan is attached at asparagine 29. A helical membrane pass occupies residues 38–63 (VSIPDGLFLSLGLVSLVENVLVVAAI). Residues 64–72 (ARNRNLHSP) lie on the Cytoplasmic side of the membrane. Residues 73 to 93 (MYCFICCLALSDLLVSGSNML) form a helical membrane-spanning segment. Topologically, residues 94–118 (ETAVILLLEAGALAARAAVVQQLDN) are extracellular. Residues 119–140 (VIDVITCSSMLSSLCFLGAIAM) traverse the membrane as a helical segment. The Cytoplasmic segment spans residues 141–163 (DRYISIFYALRYHSIVTLPRARG). A helical membrane pass occupies residues 164 to 183 (VVAAIWVASILFSTLFIAYY). The Extracellular portion of the chain corresponds to 184–191 (DHVAVLLC). Residues 192–211 (LVVFFLAMLVLMAVLYVHML) traverse the membrane as a helical segment. The Cytoplasmic portion of the chain corresponds to 212-240 (ARACQHAQGIAQLHKRQRPAHQGVGLKGA). Residues 241 to 266 (ATLTILLGIFFLCWGPFFLHLTLIVL) form a helical membrane-spanning segment. At 267 to 279 (CPQHPTCSCIFKN) the chain is on the extracellular side. Residues 280-300 (FNLFLALIICNAIIDPLIYAF) traverse the membrane as a helical segment. The Cytoplasmic segment spans residues 301 to 317 (RSQELRRTLKKVLLCSW). Residue cysteine 315 is the site of S-palmitoyl cysteine attachment.

It belongs to the G-protein coupled receptor 1 family. Interacts with MGRN1, but does not undergo MGRN1-mediated ubiquitination; this interaction competes with GNAS-binding and thus inhibits agonist-induced cAMP production. Interacts with OPN3; the interaction results in a decrease in MC1R-mediated cAMP signaling and ultimately a decrease in melanin production in melanocytes.

It localises to the cell membrane. In terms of biological role, receptor for MSH (alpha, beta and gamma) and ACTH. The activity of this receptor is mediated by G proteins which activate adenylate cyclase. Mediates melanogenesis, the production of eumelanin (black/brown) and phaeomelanin (red/yellow), via regulation of cAMP signaling in melanocytes. This is Melanocyte-stimulating hormone receptor (MC1R) from Presbytis comata (Grizzled leaf monkey).